Reading from the N-terminus, the 263-residue chain is Putative ankyrin repeat domain-containing protein 20A12 pseudogene (263 aa).

Coiled coils occupy residues 65-121 (KKDL…MLES) and 171-263 (NQVF…IQLH).

The chain is Putative ankyrin repeat domain-containing protein 20A12 pseudogene from Homo sapiens (Human).